The following is a 269-amino-acid chain: Protein-L-isoaspartate O-methyltransferase (269 aa).

The disordered stretch occupies residues 1-53 (MSAGQRPAPKFPLRLDQVKPAGRSGAAPLLRPQRPLHQAATERGRGTTPAGLG). Residue S113 is part of the active site.

The protein belongs to the methyltransferase superfamily. L-isoaspartyl/D-aspartyl protein methyltransferase family.

It is found in the cytoplasm. It carries out the reaction [protein]-L-isoaspartate + S-adenosyl-L-methionine = [protein]-L-isoaspartate alpha-methyl ester + S-adenosyl-L-homocysteine. In terms of biological role, catalyzes the methyl esterification of L-isoaspartyl residues in peptides and proteins that result from spontaneous decomposition of normal L-aspartyl and L-asparaginyl residues. It plays a role in the repair and/or degradation of damaged proteins. The protein is Protein-L-isoaspartate O-methyltransferase of Methylibium petroleiphilum (strain ATCC BAA-1232 / LMG 22953 / PM1).